The primary structure comprises 253 residues: Ribonuclease HII (253 aa).

The RNase H type-2 domain maps to 32–223 (APVAGLDEAG…FKTSGEEDRI (192 aa)). 3 residues coordinate a divalent metal cation: aspartate 38, glutamate 39, and aspartate 130.

The protein belongs to the RNase HII family. Requires Mn(2+) as cofactor. Mg(2+) is required as a cofactor.

It is found in the cytoplasm. The enzyme catalyses Endonucleolytic cleavage to 5'-phosphomonoester.. Its function is as follows. Endonuclease that specifically degrades the RNA of RNA-DNA hybrids. This is Ribonuclease HII from Chelativorans sp. (strain BNC1).